We begin with the raw amino-acid sequence, 335 residues long: Phosphoserine phosphatase RsbU (335 aa).

The PPM-type phosphatase domain maps to 123–333 (DIGAISVPAK…DDFTLIVLRR (211 aa)).

It catalyses the reaction O-phospho-L-serine + H2O = L-serine + phosphate. The catalysed reaction is O-phospho-D-serine + H2O = D-serine + phosphate. Its activity is regulated as follows. Stimulated by a long-lived interaction with RsbT. Its function is as follows. Positive regulator of sigma-B activity. Dephosphorylates RsbV in response to environmental stress conveyed from the RsbXST module. This chain is Phosphoserine phosphatase RsbU (rsbU), found in Bacillus subtilis (strain 168).